Here is a 379-residue protein sequence, read N- to C-terminus: Alkanesulfonate monooxygenase (379 aa).

It belongs to the SsuD family.

The catalysed reaction is an alkanesulfonate + FMNH2 + O2 = an aldehyde + FMN + sulfite + H2O + 2 H(+). Its function is as follows. Catalyzes the desulfonation of aliphatic sulfonates. This Pseudomonas syringae pv. tomato (strain ATCC BAA-871 / DC3000) protein is Alkanesulfonate monooxygenase.